The primary structure comprises 509 residues: MKLAYWMYAGPAHIGTLRVANSFKNVHAIMHAPLGDDYFNVMRSMLERERNFTPATASIVDRRVLGRGSQKKVVDNLLRKDKEENPDLIILTPTCTSSILQEDLQNFVDRASVISDSNIILADVDHYQVNEIQAADRTLEQVVRFYLSKQKKEKLDRFLTDVPSVNIIGIFTLGFHHQHDCRELKRLFQDLNIQINQVIPEGGSVEDLQNLPKAWLNLVPYREIGLMTAFFLKKEFGMPYLSITPMGVIDNAECIRRIEKSVNPFASIFGEKGVNYESYIDRQTRFISQAVWFSRSIDCQNFTGKQTVVFGDATHAASITKILAREMGIRVSCTGTYCKHDAEWFKEQVQDFSNEILITEDHAKVGKKIACVEPSAIFGTQMERHIGKRFDISCGVISAPVHIQNFPLGYRPFMGYEGTNQIADLVYNSFALGMEDHLLDIFGGHDMKEVITKSNPIGGLDVIWDTESQLELPQIPRFVRDKVKRETEKFAKIKGVVKITIEVMYAAKE.

Asp-36 serves as a coordination point for [4Fe-4S] cluster. Asp-298 functions as the Proton donor in the catalytic mechanism. 433–434 (GM) is a binding site for substrate.

This sequence belongs to the ChlB/BchB/BchZ family. As to quaternary structure, protochlorophyllide reductase is composed of three subunits; ChlL, ChlN and ChlB. Forms a heterotetramer of two ChlB and two ChlN subunits. [4Fe-4S] cluster serves as cofactor.

It localises to the plastid. It is found in the chloroplast. The enzyme catalyses chlorophyllide a + oxidized 2[4Fe-4S]-[ferredoxin] + 2 ADP + 2 phosphate = protochlorophyllide a + reduced 2[4Fe-4S]-[ferredoxin] + 2 ATP + 2 H2O. The protein operates within porphyrin-containing compound metabolism; chlorophyll biosynthesis (light-independent). Its function is as follows. Component of the dark-operative protochlorophyllide reductase (DPOR) that uses Mg-ATP and reduced ferredoxin to reduce ring D of protochlorophyllide (Pchlide) to form chlorophyllide a (Chlide). This reaction is light-independent. The NB-protein (ChlN-ChlB) is the catalytic component of the complex. This is Light-independent protochlorophyllide reductase subunit B from Ephedra altissima (High-climbing jointfir).